The sequence spans 473 residues: Cannabinoid receptor 1 (473 aa).

Residues Met1 to Gln118 lie on the Extracellular side of the membrane. The required for mitochondrial localization stretch occupies residues Lys2–Met23. N-linked (GlcNAc...) asparagine glycosylation is found at Asn79 and Asn85. A helical transmembrane segment spans residues Leu119–Leu144. Residues Gln145–His156 are Cytoplasmic-facing. Residues Phe157 to Leu177 traverse the membrane as a helical segment. Residues Asp178 to Asn189 lie on the Extracellular side of the membrane. The chain crosses the membrane as a helical span at residues Val190 to Ile214. Residues Asp215–Lys234 lie on the Cytoplasmic side of the membrane. Residues Ala235 to Trp257 traverse the membrane as a helical segment. The Extracellular segment spans residues Asn258–Glu275. The chain crosses the membrane as a helical span at residues Asn276 to Trp301. The Cytoplasmic segment spans residues Lys302–Thr346. Residues Leu347–Tyr367 form a helical membrane-spanning segment. Residues Asp368–Thr379 are Extracellular-facing. Residues Val380–Leu401 form a helical membrane-spanning segment. At Arg402–Val473 the chain is on the cytoplasmic side. Cys417 carries the S-palmitoyl cysteine lipid modification.

This sequence belongs to the G-protein coupled receptor 1 family. Palmitoylation at Cys-417 is important for recruitment at both plasma membrane and lipid rafts and association with G protein alpha subunits.

The protein localises to the cell membrane. The protein resides in the mitochondrion outer membrane. It localises to the cell projection. It is found in the axon. Its subcellular location is the presynapse. Hemopressin, a peptide derived from hemoglobin subunit alpha (HBA1 and/or HBA2), acts as an antagonist peptide: hemopressin-binding efficiently blocks cannabinoid receptor CNR1 and subsequent signaling. G-protein coupled receptor for cannabinoids. Mediates many cannabinoid-induced effects in the central nervous system (CNS), as well as in peripheral tissues. Regulates cellular respiration and energy production in response to cannabinoids. Signaling typically involves reduction in cyclic AMP. In Taricha granulosa (Roughskin newt), this protein is Cannabinoid receptor 1 (CNR1).